Consider the following 515-residue polypeptide: MKMIILVVSLHVLRNSAAVRVLCMFPTPSYSHQTVFDVYVNALLRRGHSLVVISPKIHNHNHGHRHHRHENLTEIDVGSVTNNFFKRLLQDSKVSRKRGIVSDSSTVTRVNYLGLARMISAQFEHEQVKRLLRSNQTFDVIVIEAFVSYPLILSYFFKDTPVIQISSGHGTAENFETMGAVARHPVYYPNMWRDRFKGLSVWQTVRQVFTEIRLYMEFSQLDADQSAMMKRQFGSKVPDVDALRKNVHMMFVNTHPVFDTNRPVPSNVQYLGGIHIDPAVTSVADEIDNDLAEFLENSTMGVVYVSLGSSVRASDMDSNMLNVFVETFRSIPYRVLWKVDKSDKIFDNIPSNVLIQRWFPQRRVLKHRNVKVFITQGGVQSTDEAIDAGVPMFGVPIMGDQFYNVYMYETYGIGRGVDTLTVDARQLTEIVMDVADNEKYKNGTLWLRDAIMDQPMRPLEKAVWYTEHVARRKGAKKHLGTRAANVTYSKYAMFDLILPMLITIFSTYLQKILSI.

Residues 1–31 (MKMIILVVSLHVLRNSAAVRVLCMFPTPSYS) form the signal peptide.

This sequence belongs to the UDP-glycosyltransferase family.

In terms of biological role, catalyzes the transfer of glucose from UDP-glucose to ecdysteroids which are insect molting hormones. Expression of egt interferes with normal insect development and block molting. This chain is Ecdysteroid UDP-glucosyltransferase (EGT), found in Spodoptera littoralis nuclear polyhedrosis virus (SlNPV).